Consider the following 177-residue polypeptide: Translation initiation factor IF-3 (177 aa).

Belongs to the IF-3 family. As to quaternary structure, monomer.

The protein localises to the cytoplasm. IF-3 binds to the 30S ribosomal subunit and shifts the equilibrium between 70S ribosomes and their 50S and 30S subunits in favor of the free subunits, thus enhancing the availability of 30S subunits on which protein synthesis initiation begins. This chain is Translation initiation factor IF-3, found in Synechocystis sp. (strain ATCC 27184 / PCC 6803 / Kazusa).